The primary structure comprises 987 residues: Leucine--tRNA ligase (987 aa).

A 'HIGH' region motif is present at residues 69-80; it reads PYPSGKGLHVGH. The short motif at 760–764 is the 'KMSKS' region element; sequence KMGKS. K763 lines the ATP pocket.

It belongs to the class-I aminoacyl-tRNA synthetase family.

It is found in the cytoplasm. It catalyses the reaction tRNA(Leu) + L-leucine + ATP = L-leucyl-tRNA(Leu) + AMP + diphosphate. This is Leucine--tRNA ligase from Bifidobacterium longum (strain DJO10A).